Consider the following 284-residue polypeptide: 2-dehydro-3-deoxyphosphooctonate aldolase (284 aa).

The protein belongs to the KdsA family.

It localises to the cytoplasm. It carries out the reaction D-arabinose 5-phosphate + phosphoenolpyruvate + H2O = 3-deoxy-alpha-D-manno-2-octulosonate-8-phosphate + phosphate. It participates in carbohydrate biosynthesis; 3-deoxy-D-manno-octulosonate biosynthesis; 3-deoxy-D-manno-octulosonate from D-ribulose 5-phosphate: step 2/3. Its pathway is bacterial outer membrane biogenesis; lipopolysaccharide biosynthesis. The sequence is that of 2-dehydro-3-deoxyphosphooctonate aldolase from Histophilus somni (strain 129Pt) (Haemophilus somnus).